Reading from the N-terminus, the 226-residue chain is Cytidylate kinase (226 aa).

10-18 (GPASSGKST) contacts ATP.

This sequence belongs to the cytidylate kinase family. Type 1 subfamily.

The protein localises to the cytoplasm. It catalyses the reaction CMP + ATP = CDP + ADP. The catalysed reaction is dCMP + ATP = dCDP + ADP. This chain is Cytidylate kinase, found in Streptococcus uberis (strain ATCC BAA-854 / 0140J).